The following is a 257-amino-acid chain: Proteasome assembly chaperone 1 (257 aa).

The protein belongs to the PSMG1 family. In terms of assembly, forms a heterodimer with psmg2.

Chaperone protein which promotes assembly of the 20S proteasome as part of a heterodimer with psmg2. The chain is Proteasome assembly chaperone 1 (psmg1) from Nematostella vectensis (Starlet sea anemone).